A 237-amino-acid polypeptide reads, in one-letter code: Ribonuclease PH (237 aa).

Phosphate contacts are provided by residues R86 and 124–126; that span reads GTR.

The protein belongs to the RNase PH family. As to quaternary structure, homohexameric ring arranged as a trimer of dimers.

It catalyses the reaction tRNA(n+1) + phosphate = tRNA(n) + a ribonucleoside 5'-diphosphate. In terms of biological role, phosphorolytic 3'-5' exoribonuclease that plays an important role in tRNA 3'-end maturation. Removes nucleotide residues following the 3'-CCA terminus of tRNAs; can also add nucleotides to the ends of RNA molecules by using nucleoside diphosphates as substrates, but this may not be physiologically important. Probably plays a role in initiation of 16S rRNA degradation (leading to ribosome degradation) during starvation. The protein is Ribonuclease PH of Cereibacter sphaeroides (strain ATCC 17029 / ATH 2.4.9) (Rhodobacter sphaeroides).